Here is a 1098-residue protein sequence, read N- to C-terminus: Paired amphipathic helix protein Sin3b (1098 aa).

Positions 1–25 (MAHAGSGGSAGRGFGGSRWGRSGSG) are enriched in gly residues. Residues 1 to 26 (MAHAGSGGSAGRGFGGSRWGRSGSGG) are disordered. The segment at 1–299 (MAHAGSGGSA…VGKYGTLQEF (299 aa)) is interaction with CRY1. PAH domains follow at residues 30-100 (LPVH…LPLG) and 145-230 (VPLE…LPEA). Positions 52-98 (PATYNGFLEIMKEFKSQSIDTPGVIRRVSQLFHEHPDLIVGFNAFLP) are interaction with REST. Polar residues predominate over residues 238–247 (NGSCEMNSGQ). Positions 238–274 (NGSCEMNSGQKNEEKSLEHNKKRSRPSLLRPVSAPAK) are disordered. An interaction with NCOR1 region spans residues 275–499 (KKMKLRGTKD…CLGGTSEVIQ (225 aa)). In terms of domain architecture, PAH 3 spans 283 to 360 (KDLSIAAVGK…AQFKSFLGVK (78 aa)). Residues 383–550 (ASCKRIGSSY…REAQQGFNKI (168 aa)) are interaction with SUDS3 and HDAC1. Residues 661 to 702 (QQCPGTSDDSADERDRDRDSAEPERRRPTDEKPPADASPEPP) are disordered. Phosphoserine is present on residues S667 and S670. Positions 673-694 (ERDRDRDSAEPERRRPTDEKPP) are enriched in basic and acidic residues.

As to quaternary structure, component of the SIN3B complex, which includes SIN3B, HDAC2 or HDAC1, PHF12 and MORF4L1. Interacts with FOXK1/MNF, MXI, MAD, NCOR1 and SAP30. Interaction with SUDS3 enhances the interaction with HDAC1 to form a complex. Interacts with CRY1, HCFC1, MAD3, MAD4, MAEL, REST, RNF220 and SETDB1. Interacts with C6orf89. Interacts with MYT1L. Ubiquitinated by RNF220 that leads to proteasomal degradation.

It is found in the nucleus. Acts as a transcriptional repressor. Interacts with MXI1 to repress MYC responsive genes and antagonize MYC oncogenic activities. Interacts with MAD-MAX heterodimers by binding to MAD. The heterodimer then represses transcription by tethering SIN3B to DNA. Also forms a complex with FOXK1 which represses transcription. With FOXK1, regulates cell cycle progression probably by repressing cell cycle inhibitor genes expression. As part of the SIN3B complex represses transcription and counteracts the histone acetyltransferase activity of EP300 through the recognition H3K27ac marks by PHF12 and the activity of the histone deacetylase HDAC2. SIN3B complex is recruited downstream of the constitutively active genes transcriptional start sites through interaction with histones and mitigates histone acetylation and RNA polymerase II progression within transcribed regions contributing to the regulation of transcription. This chain is Paired amphipathic helix protein Sin3b (Sin3b), found in Mus musculus (Mouse).